A 127-amino-acid chain; its full sequence is MVQKIKSMREFKELLGAAGNRLVVVEFSAQWCGPCKMIAPAFQAMSLQYRNVMFAQVDVDSSQELTEHCSIQVVPTFQMFKHSRKVTPFSRLKRILCCFRSGPGSKKIFEFQGADIEKLEEKIQELM.

The 126-residue stretch at 2–127 (VQKIKSMREF…KLEEKIQELM (126 aa)) folds into the Thioredoxin domain. Cys32 and Cys35 are disulfide-bonded.

The protein belongs to the thioredoxin family. Testis-specific. Expressed in spermatozoa, sperm tail, elongated and round spermatids.

Its subcellular location is the cytoplasm. The protein localises to the golgi apparatus. May be required for post-translational modifications of proteins required for acrosomal biogenesis. May act by reducing disulfide bonds within the sperm. The protein is Thioredoxin domain-containing protein 8 (Txndc8) of Rattus norvegicus (Rat).